A 266-amino-acid chain; its full sequence is Beta-lactamase OXA-20 (266 aa).

The N-terminal stretch at 1–21 (MIIRFLALLFSAVVLVSLGHA) is a signal peptide. The active-site Acyl-ester intermediate is the Ser-72. N6-carboxylysine is present on Lys-75. 210 to 212 (KTG) is a substrate binding site.

The protein belongs to the class-D beta-lactamase family.

The enzyme catalyses a beta-lactam + H2O = a substituted beta-amino acid. Its activity is regulated as follows. Inhibited by clavulanic acid. In terms of biological role, this is an oxacillin-hydrolyzing beta-lactamase. The polypeptide is Beta-lactamase OXA-20 (bla) (Pseudomonas aeruginosa).